The following is a 303-amino-acid chain: N-acetyl-D-glucosamine kinase (303 aa).

Residues 4-11 and 133-140 contribute to the ATP site; these read GFDIGGTK and GVGGGLIF. 4 residues coordinate Zn(2+): histidine 157, cysteine 177, cysteine 179, and cysteine 184.

This sequence belongs to the ROK (NagC/XylR) family. NagK subfamily.

It catalyses the reaction N-acetyl-D-glucosamine + ATP = N-acetyl-D-glucosamine 6-phosphate + ADP + H(+). Its pathway is cell wall biogenesis; peptidoglycan recycling. In terms of biological role, catalyzes the phosphorylation of N-acetyl-D-glucosamine (GlcNAc) derived from cell-wall degradation, yielding GlcNAc-6-P. The polypeptide is N-acetyl-D-glucosamine kinase (Escherichia coli (strain K12 / DH10B)).